Here is a 319-residue protein sequence, read N- to C-terminus: Acetyl-coenzyme A carboxylase carboxyl transferase subunit alpha (319 aa).

The region spanning 32–293 (NVDAEVRALR…KAVLLNELDA (262 aa)) is the CoA carboxyltransferase C-terminal domain.

Belongs to the AccA family. Acetyl-CoA carboxylase is a heterohexamer composed of biotin carboxyl carrier protein (AccB), biotin carboxylase (AccC) and two subunits each of ACCase subunit alpha (AccA) and ACCase subunit beta (AccD).

Its subcellular location is the cytoplasm. It catalyses the reaction N(6)-carboxybiotinyl-L-lysyl-[protein] + acetyl-CoA = N(6)-biotinyl-L-lysyl-[protein] + malonyl-CoA. Its pathway is lipid metabolism; malonyl-CoA biosynthesis; malonyl-CoA from acetyl-CoA: step 1/1. In terms of biological role, component of the acetyl coenzyme A carboxylase (ACC) complex. First, biotin carboxylase catalyzes the carboxylation of biotin on its carrier protein (BCCP) and then the CO(2) group is transferred by the carboxyltransferase to acetyl-CoA to form malonyl-CoA. This is Acetyl-coenzyme A carboxylase carboxyl transferase subunit alpha from Xanthomonas campestris pv. campestris (strain B100).